The sequence spans 966 residues: Translation initiation factor IF-2 (966 aa).

Basic and acidic residues-rich tracts occupy residues 99–113 (KRDE…EAAD), 123–183 (EQAR…KAEE), 197–212 (DASR…RVAV), 220–249 (AADD…EAEA), and 266–277 (PSERKAEEKKAE). Residues 99 to 382 (KRDEAGADQH…NFQAPTEPVV (284 aa)) are disordered. Residues 304–315 (AATTTTTTATTT) are compositionally biased toward low complexity. The span at 346–359 (SSGGVGGWRGGPRG) shows a compositional bias: gly residues. The tr-type G domain maps to 466–635 (PRPPVVTVMG…LLQAEVLELK (170 aa)). Residues 475-482 (GHVDHGKT) form a G1 region. 475–482 (GHVDHGKT) lines the GTP pocket. Positions 500–504 (GITQH) are G2. The segment at 521–524 (DTPG) is G3. GTP is bound by residues 521 to 525 (DTPGH) and 575 to 578 (NKID). Residues 575–578 (NKID) form a G4 region. A G5 region spans residues 611–613 (SAK).

The protein belongs to the TRAFAC class translation factor GTPase superfamily. Classic translation factor GTPase family. IF-2 subfamily.

It localises to the cytoplasm. Functionally, one of the essential components for the initiation of protein synthesis. Protects formylmethionyl-tRNA from spontaneous hydrolysis and promotes its binding to the 30S ribosomal subunits. Also involved in the hydrolysis of GTP during the formation of the 70S ribosomal complex. The protein is Translation initiation factor IF-2 of Cupriavidus pinatubonensis (strain JMP 134 / LMG 1197) (Cupriavidus necator (strain JMP 134)).